Consider the following 149-residue polypeptide: 3-dehydroquinate dehydratase (149 aa).

Residue Y22 is the Proton acceptor of the active site. The substrate site is built by N74, H80, and D87. Residue H100 is the Proton donor of the active site. Residues 101-102 (MS) and R111 each bind substrate.

The protein belongs to the type-II 3-dehydroquinase family. Homododecamer.

It carries out the reaction 3-dehydroquinate = 3-dehydroshikimate + H2O. It participates in metabolic intermediate biosynthesis; chorismate biosynthesis; chorismate from D-erythrose 4-phosphate and phosphoenolpyruvate: step 3/7. Functionally, catalyzes a trans-dehydration via an enolate intermediate. The protein is 3-dehydroquinate dehydratase of Leptothrix cholodnii (strain ATCC 51168 / LMG 8142 / SP-6) (Leptothrix discophora (strain SP-6)).